The primary structure comprises 526 residues: Outer capsid protein VP5 (526 aa).

An involved in membrane permeabilization region spans residues 1 to 42; sequence MGKIIKSLSRFGKKVGNALTSNTAKKIYNTIGKAAERFAESE.

The protein belongs to the orbivirus VP5 family.

It localises to the virion. Its function is as follows. VP5 protein is one of the two proteins (with VP2) which constitute the virus particle outer capsid. Acts as a membrane permeabilization protein that mediates release of viral particles from endosomal compartments into the cytoplasm. Permeabilization activity is probably negatively regulated by VP2 and is triggered by endosomal degradation of VP2 and exposure to low pH. The protein is Outer capsid protein VP5 (Segment-6) of Bluetongue virus 13 (isolate USA) (BTV 13).